We begin with the raw amino-acid sequence, 270 residues long: Nuclear receptor-interacting protein 2 (270 aa).

Residues 1 to 27 (MSTGQEARRDEGDSRKEQEASLRDRAH) are compositionally biased toward basic and acidic residues. The segment at 1–33 (MSTGQEARRDEGDSRKEQEASLRDRAHLSQQRQ) is disordered. Positions 61-99 (KDLQPHSVIQRRLVEGNQRRLQGESPLLQALIRGHDSSR) are interaction with NR1F2. An LXXLL motif motif is present at residues 192–196 (LQTLL).

Interacts with NR1F2, RARA and THRB in a ligand-dependent manner. As to expression, expression is restricted to the central nervous system (neurons in the dentate gyrus of the hippocampus, the amygdala, thalamic and hypothalamic regions).

The protein localises to the nucleus. In terms of biological role, down-regulates transcriptional activation by nuclear receptors, such as NR1F2. This chain is Nuclear receptor-interacting protein 2 (Nrip2), found in Mus musculus (Mouse).